Reading from the N-terminus, the 320-residue chain is Phospho-N-acetylmuramoyl-pentapeptide-transferase (320 aa).

Helical transmembrane passes span 5 to 25 (FWAF…VIKF), 51 to 71 (MGGA…SVAY), 75 to 95 (IGFV…IIGG), 121 to 141 (LCAV…ILNI), 143 to 163 (FIGV…WLVG), 176 to 196 (GLLT…ALGV), 198 to 218 (NHII…FLLF), 241 to 261 (IESI…IFVI), and 300 to 320 (IDAL…LYMS).

Belongs to the glycosyltransferase 4 family. MraY subfamily. Mg(2+) serves as cofactor.

It is found in the cell membrane. The enzyme catalyses UDP-N-acetyl-alpha-D-muramoyl-L-alanyl-gamma-D-glutamyl-L-lysyl-D-alanyl-D-alanine + di-trans,octa-cis-undecaprenyl phosphate = Mur2Ac(oyl-L-Ala-gamma-D-Glu-L-Lys-D-Ala-D-Ala)-di-trans,octa-cis-undecaprenyl diphosphate + UMP. The protein operates within cell wall biogenesis; peptidoglycan biosynthesis. Its function is as follows. Catalyzes the initial step of the lipid cycle reactions in the biosynthesis of the cell wall peptidoglycan: transfers peptidoglycan precursor phospho-MurNAc-pentapeptide from UDP-MurNAc-pentapeptide onto the lipid carrier undecaprenyl phosphate, yielding undecaprenyl-pyrophosphoryl-MurNAc-pentapeptide, known as lipid I. The sequence is that of Phospho-N-acetylmuramoyl-pentapeptide-transferase from Leuconostoc mesenteroides subsp. mesenteroides (strain ATCC 8293 / DSM 20343 / BCRC 11652 / CCM 1803 / JCM 6124 / NCDO 523 / NBRC 100496 / NCIMB 8023 / NCTC 12954 / NRRL B-1118 / 37Y).